A 737-amino-acid polypeptide reads, in one-letter code: Polyribonucleotide nucleotidyltransferase (737 aa).

Residues Asp-489 and Asp-495 each coordinate Mg(2+). The KH domain maps to Pro-556–Ile-615. The region spanning Asp-625–Lys-693 is the S1 motif domain. Positions Ser-691–Glu-737 are disordered. A compositionally biased stretch (basic and acidic residues) spans Pro-700 to Pro-714. The span at His-715–Lys-724 shows a compositional bias: basic residues. A compositionally biased stretch (basic and acidic residues) spans Pro-725–Glu-737.

It belongs to the polyribonucleotide nucleotidyltransferase family. It depends on Mg(2+) as a cofactor.

The protein localises to the cytoplasm. It catalyses the reaction RNA(n+1) + phosphate = RNA(n) + a ribonucleoside 5'-diphosphate. Its function is as follows. Involved in mRNA degradation. Catalyzes the phosphorolysis of single-stranded polyribonucleotides processively in the 3'- to 5'-direction. The polypeptide is Polyribonucleotide nucleotidyltransferase (Streptococcus pneumoniae (strain JJA)).